The sequence spans 198 residues: 3-isopropylmalate dehydratase small subunit (198 aa).

Belongs to the LeuD family. LeuD type 1 subfamily. In terms of assembly, heterodimer of LeuC and LeuD.

It carries out the reaction (2R,3S)-3-isopropylmalate = (2S)-2-isopropylmalate. It functions in the pathway amino-acid biosynthesis; L-leucine biosynthesis; L-leucine from 3-methyl-2-oxobutanoate: step 2/4. In terms of biological role, catalyzes the isomerization between 2-isopropylmalate and 3-isopropylmalate, via the formation of 2-isopropylmaleate. This is 3-isopropylmalate dehydratase small subunit from Mycobacterium avium (strain 104).